A 2851-amino-acid chain; its full sequence is Highly reducing polyketide synthase sthA (2851 aa).

In terms of domain architecture, Ketosynthase family 3 (KS3) spans 8 to 415; the sequence is NEPIVIIGSG…GTNAHAIVEG (408 aa). The interval 304–324 is disordered; it reads LDPESPNDRPQYIESHGTGTP. The interval 529–851 is acyl transferase (AT) domain; that stretch reads IFTGQGAQYA…PYHGSLVRGE (323 aa). Residues 926-1059 are N-terminal hotdog fold; that stretch reads HQLLGNVSPD…GELNILLVDD (134 aa). A PKS/mFAS DH domain is found at 926-1235; that stretch reads HQLLGNVSPD…FKPVGSDAKD (310 aa). The interval 949-1242 is dehydratase (DH) domain; sequence PKEMTWLEGH…AKDDRNVFYK (294 aa). His-958 functions as the Proton acceptor; for dehydratase activity in the catalytic mechanism. A C-terminal hotdog fold region spans residues 1076–1235; it reads MIPVQPSRLY…FKPVGSDAKD (160 aa). The active-site Proton donor; for dehydratase activity is the Asp-1137. Positions 1390–1577 are methyltransferase (MT) domain; sequence QCTLWVAGVL…GIDTMSPPEL (188 aa). Positions 2079–2252 are ketoreductase (KR)domain; that stretch reads TYWLVGLSGA…RSSVVNVGAI (174 aa). The region spanning 2360 to 2443 is the Carrier domain; it reads ADITKVVQQA…DLAAESIPAE (84 aa). Ser-2399 carries the post-translational modification O-(pantetheine 4'-phosphoryl)serine. Residues 2447–2496 are disordered; that stretch reads HVQQQQQQAGRQDASSNTSSDDETASTLPTSPESASPGTSTPVPEKDISP. Residues 2455–2488 are compositionally biased toward polar residues; that stretch reads AGRQDASSNTSSDDETASTLPTSPESASPGTSTP. Positions 2535 to 2767 are reductase (R) domain; it reads LTGCSGLLGH…DLVSVDTCCS (233 aa).

The cofactor is pantetheine 4'-phosphate.

It catalyses the reaction 7 malonyl-CoA + acetyl-CoA + 10 AH2 + 5 S-adenosyl-L-methionine + 2 H(+) = dehydroprobetaenone I + 10 A + 5 S-adenosyl-L-homocysteine + 7 CO2 + 8 CoA + 6 H2O. The protein operates within mycotoxin biosynthesis. Its function is as follows. Highly reducing polyketide synthase; part of the gene cluster that mediates the biosynthesis of the phytotoxin stemphyloxin II. The first step of the pathway is the synthesis of dehydroprobetaenone I by the polyketide synthase sthA and the enoyl reductase sthE via condensation of one acetyl-CoA starter unit with 7 malonyl-CoA units and 5 methylations. The C-terminal reductase (R) domain of sthA catalyzes the reductive release of the polyketide chain. Because sthA lacks a designated enoylreductase (ER) domain, the required activity is provided the enoyl reductase sthE. The short-chain dehydrogenase/reductase sthC then catalyzes reduction of dehydroprobetaenone I to probetaenone I. The cytochrome P450 monooxygenase sthF catalyzes successive epoxidation, oxidation (resulting from epoxide opening) and hydroxylation to install a tertiary alcohol in the decaline ring to yield betaenone C from dehydroprobetaenone I and betaenone B from probetaenone I. The FAD-linked oxidoreductase sthB is responsible for the conversion of betaenone C to betaenone A via an intramolecular aldol reaction between C-1 and C-17 to form the bridged tricyclic system in betaenone A. Finally, the cytochrome P450 monooxygenase sthD catalyzes the hydroxylation of C-15 to afford the final metabolite stemphyloxin II. This chain is Highly reducing polyketide synthase sthA, found in Phaeosphaeria nodorum (strain SN15 / ATCC MYA-4574 / FGSC 10173) (Glume blotch fungus).